Reading from the N-terminus, the 92-residue chain is MPKLEMMLLVLLILPLSSFSAAGEQVVQGDQRSDGLARYLQRGGRDVQECQVVTPGSKWGRCCLNRVCGPMCCPASHCYCIYHRGRGHGCSC.

Residues 1–24 (MPKLEMMLLVLLILPLSSFSAAGE) form the signal peptide. Positions 25-45 (QVVQGDQRSDGLARYLQRGGR) are excised as a propeptide. The residue at position 49 (glutamate 49) is a 4-carboxyglutamate. Proline 55 bears the 4-hydroxyproline mark. Disulfide bonds link cysteine 63–cysteine 72, cysteine 68–cysteine 80, cysteine 73–cysteine 90, and cysteine 78–cysteine 92.

It belongs to the conotoxin D superfamily. Hetero-, homo- or pseudo-homodimer (identical sequence, different post-translational modifications). As to expression, expressed by the venom duct.

Its subcellular location is the secreted. Alpha-conotoxins act on postsynaptic membranes, they bind to the nicotinic acetylcholine receptors (nAChR) and thus inhibit them. Through its two C-terminal domains, this homodimeric protein would bind to two nAChR allosteric sites, located outside the nAChR C-loop of the principal binding face and at the adjacent binding interface in a clockwise direction. This toxin specifically blocks mammalian neuronal nAChR of the alpha-7/CHRNA7, alpha-3-beta-2/CHRNA3-CHRNB2 and alpha-4-beta-2/CHRNA4-CHRNB2 subtypes. The chain is Alpha-conotoxin-like Mi20.2 from Conus miles (Soldier cone).